A 414-amino-acid polypeptide reads, in one-letter code: 3-isopropylmalate dehydratase large subunit (414 aa).

[4Fe-4S] cluster-binding residues include Cys295, Cys353, and Cys356.

It belongs to the aconitase/IPM isomerase family. LeuC type 2 subfamily. In terms of assembly, heterodimer of LeuC and LeuD. The cofactor is [4Fe-4S] cluster.

The catalysed reaction is (2R,3S)-3-isopropylmalate = (2S)-2-isopropylmalate. The protein operates within amino-acid biosynthesis; L-leucine biosynthesis; L-leucine from 3-methyl-2-oxobutanoate: step 2/4. Its function is as follows. Catalyzes the isomerization between 2-isopropylmalate and 3-isopropylmalate, via the formation of 2-isopropylmaleate. This is 3-isopropylmalate dehydratase large subunit from Pyrobaculum islandicum (strain DSM 4184 / JCM 9189 / GEO3).